Reading from the N-terminus, the 463-residue chain is Ribulose bisphosphate carboxylase large chain (463 aa).

Lys-5 carries the N6,N6,N6-trimethyllysine modification. Positions 114 and 164 each coordinate substrate. The Proton acceptor role is filled by Lys-166. Lys-168 is a binding site for substrate. The Mg(2+) site is built by Lys-192, Asp-194, and Glu-195. At Lys-192 the chain carries N6-carboxylysine. His-285 functions as the Proton acceptor in the catalytic mechanism. Substrate is bound by residues Arg-286, His-318, and Ser-370.

This sequence belongs to the RuBisCO large chain family. Type I subfamily. Heterohexadecamer of 8 large chains and 8 small chains; disulfide-linked. The disulfide link is formed within the large subunit homodimers. Requires Mg(2+) as cofactor. The disulfide bond which can form in the large chain dimeric partners within the hexadecamer appears to be associated with oxidative stress and protein turnover.

Its subcellular location is the plastid. The protein localises to the chloroplast. The enzyme catalyses 2 (2R)-3-phosphoglycerate + 2 H(+) = D-ribulose 1,5-bisphosphate + CO2 + H2O. The catalysed reaction is D-ribulose 1,5-bisphosphate + O2 = 2-phosphoglycolate + (2R)-3-phosphoglycerate + 2 H(+). Its function is as follows. RuBisCO catalyzes two reactions: the carboxylation of D-ribulose 1,5-bisphosphate, the primary event in carbon dioxide fixation, as well as the oxidative fragmentation of the pentose substrate in the photorespiration process. Both reactions occur simultaneously and in competition at the same active site. The chain is Ribulose bisphosphate carboxylase large chain from Pelargonium grandiflorum (Geranium).